We begin with the raw amino-acid sequence, 151 residues long: 3-hydroxyacyl-[acyl-carrier-protein] dehydratase FabZ (151 aa).

His-54 is a catalytic residue.

The protein belongs to the thioester dehydratase family. FabZ subfamily.

It is found in the cytoplasm. It carries out the reaction a (3R)-hydroxyacyl-[ACP] = a (2E)-enoyl-[ACP] + H2O. Its function is as follows. Involved in unsaturated fatty acids biosynthesis. Catalyzes the dehydration of short chain beta-hydroxyacyl-ACPs and long chain saturated and unsaturated beta-hydroxyacyl-ACPs. The sequence is that of 3-hydroxyacyl-[acyl-carrier-protein] dehydratase FabZ from Pectobacterium atrosepticum (strain SCRI 1043 / ATCC BAA-672) (Erwinia carotovora subsp. atroseptica).